The primary structure comprises 332 residues: uncharacterized protein (332 aa).

It belongs to the bacterial solute-binding protein 1 family. WtpA subfamily.

This is an uncharacterized protein from Methanococcus maripaludis (strain DSM 14266 / JCM 13030 / NBRC 101832 / S2 / LL).